Reading from the N-terminus, the 1470-residue chain is Rap guanine nucleotide exchange factor (1470 aa).

2 disordered regions span residues 130-227 (PTEP…SYND) and 250-313 (HRRE…GGFM). The span at 173–183 (MPPPPVPPRPL) shows a compositional bias: pro residues. Low complexity-rich tracts occupy residues 184-193 (RLPQTAAKGP) and 215-224 (TTSSSSSNTS). Polar residues predominate over residues 256–266 (NSVGGQAQNGI). Residues 275–292 (RSTASSTTTEGETASNEG) are compositionally biased toward low complexity. 347-463 (AFAALPMSIK…IEKDRDGLTG (117 aa)) contributes to the a nucleoside 3',5'-cyclic phosphate binding site. In terms of domain architecture, N-terminal Ras-GEF spans 478–592 (CGQVLIKGKP…SLLNIACSVK (115 aa)). A PDZ domain is found at 597–679 (QVILTRRKDD…LTLMLKNNVL (83 aa)). One can recognise a Ras-associating domain in the interval 782-869 (PEHVLKIYRN…SRYYLKNNSR (88 aa)). The Ras-GEF domain maps to 894 to 1124 (NAQVVAAQLT…FENSNVATMR (231 aa)). Over residues 1176–1189 (QTAHRGANSSSTAN) the composition is skewed to polar residues. 4 disordered regions span residues 1176–1213 (QTAH…DQSS), 1253–1326 (KVKG…NIPP), 1347–1370 (VIPT…PASS), and 1422–1455 (ATLP…RMGT). Over residues 1198-1211 (PSSLSSQSAGSADQ) the composition is skewed to low complexity. 2 stretches are compositionally biased toward polar residues: residues 1260-1274 (QITS…SLQR) and 1282-1308 (RQAT…YQSD). Residues 1309-1321 (NGRRQRSGSEGRF) are compositionally biased toward basic and acidic residues. Residues 1349 to 1370 (PTHPHGHSPTSPRCRSRSPASS) show a composition bias toward low complexity.

The protein belongs to the RAPGEF2 family. Expressed in hermaphrodite-specific neurons (HSNs), oviduct sheath cells and lateral seam cells.

Its function is as follows. Acts as a guanine nucleotide exchange factor for small G protein GTPases like rap-1 and rap-2. Required in the hypodermis, especially in the seam cells, for proper formation of the cuticle. In Caenorhabditis elegans, this protein is Rap guanine nucleotide exchange factor (pxf-1).